The sequence spans 545 residues: CTP synthase (545 aa).

Residues 1–266 are amidoligase domain; sequence MTTRYIFVTG…DDLVVKRFGL (266 aa). Position 14 (Ser-14) interacts with CTP. Residue Ser-14 participates in UTP binding. Residues 15 to 20 and Asp-72 each bind ATP; that span reads SLGKGI. Residues Asp-72 and Glu-140 each contribute to the Mg(2+) site. Residues 147–149, 187–192, and Lys-223 contribute to the CTP site; these read DIE and KTKPTQ. UTP is bound by residues 187–192 and Lys-223; that span reads KTKPTQ. 239–241 contributes to the ATP binding site; the sequence is KDV. The Glutamine amidotransferase type-1 domain maps to 291–542; it reads VIGMVGKYIE…IAAASAHQKR (252 aa). Gly-352 is an L-glutamine binding site. Catalysis depends on Cys-379, which acts as the Nucleophile; for glutamine hydrolysis. Residues 380 to 383, Glu-403, and Arg-470 each bind L-glutamine; that span reads LGMQ. Catalysis depends on residues His-515 and Glu-517.

The protein belongs to the CTP synthase family. In terms of assembly, homotetramer.

The catalysed reaction is UTP + L-glutamine + ATP + H2O = CTP + L-glutamate + ADP + phosphate + 2 H(+). It carries out the reaction L-glutamine + H2O = L-glutamate + NH4(+). The enzyme catalyses UTP + NH4(+) + ATP = CTP + ADP + phosphate + 2 H(+). It functions in the pathway pyrimidine metabolism; CTP biosynthesis via de novo pathway; CTP from UDP: step 2/2. Its activity is regulated as follows. Allosterically activated by GTP, when glutamine is the substrate; GTP has no effect on the reaction when ammonia is the substrate. The allosteric effector GTP functions by stabilizing the protein conformation that binds the tetrahedral intermediate(s) formed during glutamine hydrolysis. Inhibited by the product CTP, via allosteric rather than competitive inhibition. In terms of biological role, catalyzes the ATP-dependent amination of UTP to CTP with either L-glutamine or ammonia as the source of nitrogen. Regulates intracellular CTP levels through interactions with the four ribonucleotide triphosphates. The chain is CTP synthase from Shewanella baltica (strain OS155 / ATCC BAA-1091).